The chain runs to 207 residues: N-(5'-phosphoribosyl)anthranilate isomerase (207 aa).

The protein belongs to the TrpF family.

The catalysed reaction is N-(5-phospho-beta-D-ribosyl)anthranilate = 1-(2-carboxyphenylamino)-1-deoxy-D-ribulose 5-phosphate. It functions in the pathway amino-acid biosynthesis; L-tryptophan biosynthesis; L-tryptophan from chorismate: step 3/5. In Geotalea daltonii (strain DSM 22248 / JCM 15807 / FRC-32) (Geobacter daltonii), this protein is N-(5'-phosphoribosyl)anthranilate isomerase.